The chain runs to 465 residues: ATP-dependent protease ATPase subunit HslU (465 aa).

ATP-binding positions include valine 20, 62 to 67 (GVGKTE), aspartate 277, glutamate 343, and arginine 415.

It belongs to the ClpX chaperone family. HslU subfamily. A double ring-shaped homohexamer of HslV is capped on each side by a ring-shaped HslU homohexamer. The assembly of the HslU/HslV complex is dependent on binding of ATP.

The protein localises to the cytoplasm. Functionally, ATPase subunit of a proteasome-like degradation complex; this subunit has chaperone activity. The binding of ATP and its subsequent hydrolysis by HslU are essential for unfolding of protein substrates subsequently hydrolyzed by HslV. HslU recognizes the N-terminal part of its protein substrates and unfolds these before they are guided to HslV for hydrolysis. The sequence is that of ATP-dependent protease ATPase subunit HslU from Geobacillus kaustophilus (strain HTA426).